We begin with the raw amino-acid sequence, 205 residues long: Syndecan 4-B (205 aa).

A signal peptide spans 1–17 (MNRLLLLLALVLSGVAA). The Extracellular segment spans residues 18–162 (ESIRETETMD…FFQRTEVIVA (145 aa)). A disordered region spans residues 26 to 113 (MDPTSMLEYE…HDFDETKTGR (88 aa)). O-linked (Xyl...) (glycosaminoglycan) serine glycans are attached at residues Ser-37, Ser-73, and Ser-75. Residues 44 to 94 (VFVDEDDDDDYEDGVDYEIDSESDNDEDYSGSGDDDFDDEDNVEDEDEEET) show a composition bias toward acidic residues. Basic and acidic residues predominate over residues 102–113 (PEHDFDETKTGR). The helical transmembrane segment at 163-183 (IIAGTLVGLVVAVSFIVFLVI) threads the bilayer. Residues 184 to 205 (RRNQNGDLVKKPIYKKTSTMEV) are Cytoplasmic-facing.

The protein belongs to the syndecan proteoglycan family. Interacts with the Wnt receptor fzd7 and its signal transducer dvl2/dsh. In terms of processing, O-glycosylated; contains both chondroitin sulfate and heparan sulfate. Ser-37, Ser-73 and Ser-75 can all be modified by either chondroitin sulfate or heparan sulfate, and the protein exists in forms that contain only chondroitin sulfate, only heparan sulfate and both chondroitin sulfate and heparan sulfate. As to expression, expressed in the animal hemisphere from the 4-cell to the blastula stage. During gastrulation, expressed in the involuting dorsal mesoderm and ectoderm. After involution, localized mainly to the anterior neuroectoderm. At later stages, expressed in the brain, branchial arches, pronephros, tailbud, and at low levels in the somites.

The protein localises to the membrane. Cell surface proteoglycan. Regulates non-canonical Wnt signaling, being necessary and sufficient for fibronectrin-mediated translocation of dvl2/dsh to the plasma membrane. Required for proper convergent extension movements during gastrulation, which shape the neural plate, and for subsequent neural tube closure. The polypeptide is Syndecan 4-B (sdc4-b) (Xenopus laevis (African clawed frog)).